The sequence spans 279 residues: HTH-type transcriptional activator RhaS (279 aa).

Residues 175–273 enclose the HTH araC/xylS-type domain; it reads QALLGWLQNN…SQAPKSLRHQ (99 aa). 2 DNA-binding regions (H-T-H motif) span residues 192–213 and 240–263; these read GGLA…KQHT and ITTI…RKAF.

As to quaternary structure, binds DNA as a dimer.

It is found in the cytoplasm. Activates expression of the rhaBAD and rhaT operons. The protein is HTH-type transcriptional activator RhaS of Pectobacterium atrosepticum (strain SCRI 1043 / ATCC BAA-672) (Erwinia carotovora subsp. atroseptica).